The following is a 565-amino-acid chain: Oxygen-dependent choline dehydrogenase (565 aa).

7 to 36 is an FAD binding site; the sequence is DYIICGAGSAGNVLATRLTEDPGVTVLLLE. The active-site Proton acceptor is H474.

Belongs to the GMC oxidoreductase family. FAD serves as cofactor.

The catalysed reaction is choline + A = betaine aldehyde + AH2. It catalyses the reaction betaine aldehyde + NAD(+) + H2O = glycine betaine + NADH + 2 H(+). It participates in amine and polyamine biosynthesis; betaine biosynthesis via choline pathway; betaine aldehyde from choline (cytochrome c reductase route): step 1/1. Its function is as follows. Involved in the biosynthesis of the osmoprotectant glycine betaine. Catalyzes the oxidation of choline to betaine aldehyde and betaine aldehyde to glycine betaine at the same rate. This Burkholderia pseudomallei (strain 1710b) protein is Oxygen-dependent choline dehydrogenase.